Reading from the N-terminus, the 136-residue chain is Ubiquinol-cytochrome-c reductase complex assembly factor 2 (136 aa).

A mitochondrion-targeting transit peptide spans 1–13 (MAALRYRRFLKLC).

As to quaternary structure, interacts with UQCC1.

It localises to the mitochondrion matrix. It is found in the mitochondrion nucleoid. The protein resides in the mitochondrion. The protein localises to the mitochondrion intermembrane space. Its subcellular location is the mitochondrion inner membrane. Functionally, required for the assembly of the ubiquinol-cytochrome c reductase complex (mitochondrial respiratory chain complex III or cytochrome b-c1 complex). Plays a role in the modulation of respiratory chain activities such as oxygen consumption and ATP production and via its modulation of the respiratory chain activity can regulate skeletal muscle differentiation and insulin secretion by pancreatic beta-cells. Involved in cytochrome b translation and/or stability. The chain is Ubiquinol-cytochrome-c reductase complex assembly factor 2 (Uqcc2) from Rattus norvegicus (Rat).